The following is a 137-amino-acid chain: Nucleoside diphosphate kinase (137 aa).

Lysine 9, phenylalanine 57, arginine 85, threonine 91, arginine 102, and asparagine 112 together coordinate ATP. Histidine 115 acts as the Pros-phosphohistidine intermediate in catalysis.

The protein belongs to the NDK family. In terms of assembly, homotetramer. It depends on Mg(2+) as a cofactor.

It is found in the cytoplasm. It carries out the reaction a 2'-deoxyribonucleoside 5'-diphosphate + ATP = a 2'-deoxyribonucleoside 5'-triphosphate + ADP. It catalyses the reaction a ribonucleoside 5'-diphosphate + ATP = a ribonucleoside 5'-triphosphate + ADP. Its function is as follows. Major role in the synthesis of nucleoside triphosphates other than ATP. The ATP gamma phosphate is transferred to the NDP beta phosphate via a ping-pong mechanism, using a phosphorylated active-site intermediate. The chain is Nucleoside diphosphate kinase from Campylobacter hominis (strain ATCC BAA-381 / DSM 21671 / CCUG 45161 / LMG 19568 / NCTC 13146 / CH001A).